The chain runs to 379 residues: MGYARKVGWVTAGLVIGAGACYCIYRLTRGRKQNKEKMAEGGPGDVEDAGDCSGARYNDWSDDDDDSNESKSIVWYPPWARIGTEAGTRARARARARATRARRAVQKRASPNSDDTVLSPQELQKVLCLVEMSEKPYILEAALIALGNNAAYAFNRDIIRDLGGLPIVAKILNTRDPIVKEKALIVLNNLSVNAENQRRLKIYMNQVCDDTVTSRLNSSVQLAGLRLLTNMTVTNEYQHILANSISDFFRLFSAGNEETKLQVLKLLLNLAENPAMTRELLGAHVPSSLGSLFNKKEYKEVILKLLSIFENINDNFKWEENEPAQNHFSEGSLFFFLKEFQVCADKVLGIESHHDFQVRVKVGKFVTKLTERMFPKSQE.

Residues 1 to 6 (MGYARK) lie on the Mitochondrial intermembrane side of the membrane. Mitochondrion outer membrane (MOM)-targeting sequence regions lie at residues 1–6 (MGYARK) and 26–37 (RLTRGRKQNKEK). Residues 7–29 (VGWVTAGLVIGAGACYCIYRLTR) traverse the membrane as a helical; Signal-anchor segment. Over 30-379 (GRKQNKEKMA…TERMFPKSQE (350 aa)) the chain is Cytoplasmic. Residues 34–69 (NKEKMAEGGPGDVEDAGDCSGARYNDWSDDDDDSNE) form a disordered region. 3 positions are modified to phosphoserine: serine 61, serine 67, and serine 72. Residues 89–98 (RARARARARA) form a nuclear localization signal region. Serine 110 carries the phosphoserine modification. ARM repeat units lie at residues 111 to 151 (PNSD…NNAA), 153 to 192 (AFNR…NLSV), and 233 to 272 (VTNE…NLAE).

This sequence belongs to the eutherian X-chromosome-specific Armcx family. Interacts (via ARM domain) with MIRO1, MIRO2 and TRAK2. The interaction with Miro is calcium-dependent. Interacts with Sox10.

The protein localises to the mitochondrion outer membrane. It is found in the cytoplasm. It localises to the nucleus. In terms of biological role, regulates mitochondrial aggregation and transport in axons in living neurons. May link mitochondria to the Trak2-kinesin motor complex via its interaction with Miro and Trak2. Mitochondrial distribution and dynamics is regulated through Armcx3 protein degradation, which is promoted by PCK and negatively regulated by Wnt1. Enhances the Sox10-mediated transactivation of the neuronal acetylcholine receptor subunit alpha-3 and beta-4 subunit gene promoters. The protein is Armadillo repeat-containing X-linked protein 3 (Armcx3) of Rattus norvegicus (Rat).